The sequence spans 5875 residues: Probable E3 ubiquitin-protein ligase DDB_G0283893 (5875 aa).

Disordered stretches follow at residues 17 to 64 (DNNN…QPPE), 164 to 185 (NNNN…QSNN), 232 to 276 (DSNN…TTTS), 302 to 342 (PSFK…CGNG), 642 to 693 (TTTT…SPPI), 716 to 740 (SIRS…TTNA), 1081 to 1101 (ITPT…TSIP), 1291 to 1367 (DGWE…KEST), 1806 to 1851 (QESE…SSPP), 1952 to 1982 (KKPS…KDEV), 2008 to 2036 (EDED…DDEE), 2109 to 2203 (KALK…TGSG), 2893 to 2930 (DSDD…TNDS), 3083 to 3119 (TSPS…SGSN), and 3195 to 3214 (LLPP…DNTN). Residues 18–52 (NNNNNNNNNNNNNNNNNNNNNNNNNNNSNNNNNKN) show a composition bias toward low complexity. The segment covering 237–249 (DNKENKKEDKESS) has biased composition (basic and acidic residues). Low complexity-rich tracts occupy residues 250–276 (KPIA…TTTS), 317–333 (TSTI…ITQP), and 642–656 (TTTT…TTTT). The span at 657 to 669 (NESIPMETTRSST) shows a compositional bias: polar residues. Over residues 670-693 (PIPIVNNNNNNNDSKSNSKKSPPI) the composition is skewed to low complexity. Over residues 716 to 725 (SIRSSSNKVN) the composition is skewed to polar residues. Residues 728–740 (TPKSSTTTTTTNA) show a composition bias toward low complexity. A compositionally biased stretch (acidic residues) spans 1297–1330 (FNDDDDEEEDEEEEEEMDEDDSENDEDEDSEESE). Residues 1300–1328 (DDDEEEDEEEEEEMDEDDSENDEDEDSEE) are a coiled coil. Low complexity-rich tracts occupy residues 1347 to 1363 (TTTT…TATT) and 1838 to 1851 (SNSS…SSPP). Positions 1963–1977 (GGCHHSNHHHHHHHS) are enriched in basic residues. The UBR-type zinc-finger motif lies at 2042 to 2113 (KVCTYTFTKN…KGNPCKALKP (72 aa)). Composition is skewed to low complexity over residues 2118–2168 (PPKQ…TNTN) and 2178–2203 (SSSS…TGSG). Acidic residues predominate over residues 2893–2903 (DSDDSDDEFPT). Over residues 2908-2917 (VTSSGLSTSA) the composition is skewed to low complexity. Positions 3201-3211 (SSSNENVVDND) are enriched in low complexity. The segment at 3226–3280 (EVLFSCDLCNINPITGKRWNCSNCGDFDLCNQCYQNPEKDHPKDHIFKEFIIDEP) adopts a ZZ-type zinc-finger fold. Cys-3231, Cys-3234, Cys-3246, Cys-3249, Cys-3255, Cys-3258, His-3266, and His-3270 together coordinate Zn(2+). Disordered regions lie at residues 3282–3312 (KDGD…QDDS), 3326–3359 (LNNN…PTTN), and 3754–3776 (SSTS…SNDI). Composition is skewed to low complexity over residues 3295-3307 (QQQK…LQQD) and 3327-3358 (NNNN…TPTT). Residues 3313–3332 (EYDEELKIAISMSLNNNNNN) form the UIM domain. The segment covering 3754–3763 (SSTSQDTQQE) has biased composition (polar residues). Low complexity predominate over residues 3764–3774 (SSNNNNNNNSN). The stretch at 4118-4146 (IENQEDHKRAIQTIEKESENAHKKYQRLI) forms a coiled coil. Low complexity predominate over residues 4182-4222 (NTSTNSTGSNNQSINSSSGNISTNSSSSSSSSFGISNQSSS). Disordered regions lie at residues 4182 to 4237 (NTST…GGVI), 4295 to 4323 (FISG…RQCP), and 4616 to 4671 (KILS…FDND). Over residues 4223–4236 (GNGGGGVGSGGGGV) the composition is skewed to gly residues. Over residues 4308 to 4317 (QQQQQQQQQQ) the composition is skewed to low complexity. The stretch at 4585–4618 (QIQQQIALQQQQIQQQIQQQQQQLNESVSGLKIL) forms a coiled coil. 2 stretches are compositionally biased toward low complexity: residues 4619–4635 (SPSS…ATGS) and 4645–4659 (SSGS…ISSS). The UBR4 E3 catalytic module stretch occupies residues 5357-5870 (PALPFVLVLL…EYLLKLYKSV (514 aa)). Residues 5476–5620 (GFTCMVCREG…WVNLNNISRV (145 aa)) form a HemiRING-type zinc finger. Zn(2+)-binding residues include Cys-5479, Cys-5482, His-5554, and Cys-5557. The 248-residue stretch at 5623-5870 (PKFRILSHDL…EYLLKLYKSV (248 aa)) folds into the UZI domain. Positions 5819–5846 (QVDVKELLNCFENELKEFQDEMEFFDDE) form a coiled coil.

Belongs to the UBR4 family.

It participates in protein modification; protein ubiquitination. Functionally, probable E3 ubiquitin-protein ligase. The polypeptide is Probable E3 ubiquitin-protein ligase DDB_G0283893 (Dictyostelium discoideum (Social amoeba)).